We begin with the raw amino-acid sequence, 141 residues long: U1 small nuclear ribonucleoprotein C (141 aa).

The Matrin-type zinc finger occupies 4-36 (YYCEYCDKYLTHDSPSVRKSHTIGKVHQQAVTL). The tract at residues 69–141 (LLPPNMVPGQ…SNSPPSNNDQ (73 aa)) is disordered. Positions 83-97 (MMPPGQFPFPPPPGQ) are enriched in pro residues. 2 stretches are compositionally biased toward low complexity: residues 100–110 (GGMPPHQQQPM) and 124–141 (QQSAQQFNSNSPPSNNDQ).

Belongs to the U1 small nuclear ribonucleoprotein C family. In terms of assembly, component of the U1 snRNP. The U1 snRNP is composed of the U1 snRNA and the 7 core Sm proteins SNRPB, SNRPD1, SNRPD2, SNRPD3, SNRPE, SNRPF and SNRPG that assemble in a heptameric protein ring on the Sm site of the small nuclear RNA to form the core snRNP, and at least 3 U1 snRNP-specific proteins SNRNP70/U1-70K, SNRPA/U1-A and SNRPC/U1-C. SNRPC/U1-C interacts with U1 snRNA and the 5' splice-site region of the pre-mRNA.

The protein resides in the nucleus. Its function is as follows. Component of the spliceosomal U1 snRNP, which is essential for recognition of the pre-mRNA 5' splice-site and the subsequent assembly of the spliceosome. SNRPC/U1-C is directly involved in initial 5' splice-site recognition for both constitutive and regulated alternative splicing. The interaction with the 5' splice-site seems to precede base-pairing between the pre-mRNA and the U1 snRNA. Stimulates commitment or early (E) complex formation by stabilizing the base pairing of the 5' end of the U1 snRNA and the 5' splice-site region. The sequence is that of U1 small nuclear ribonucleoprotein C from Heterostelium pallidum (strain ATCC 26659 / Pp 5 / PN500) (Cellular slime mold).